Here is a 345-residue protein sequence, read N- to C-terminus: S-adenosylmethionine:tRNA ribosyltransferase-isomerase (345 aa).

Belongs to the QueA family. As to quaternary structure, monomer.

It localises to the cytoplasm. It carries out the reaction 7-aminomethyl-7-carbaguanosine(34) in tRNA + S-adenosyl-L-methionine = epoxyqueuosine(34) in tRNA + adenine + L-methionine + 2 H(+). It participates in tRNA modification; tRNA-queuosine biosynthesis. Its function is as follows. Transfers and isomerizes the ribose moiety from AdoMet to the 7-aminomethyl group of 7-deazaguanine (preQ1-tRNA) to give epoxyqueuosine (oQ-tRNA). The protein is S-adenosylmethionine:tRNA ribosyltransferase-isomerase of Shewanella sp. (strain W3-18-1).